The primary structure comprises 526 residues: Probable feruloyl esterase B-2 (526 aa).

A signal peptide spans 1-18; that stretch reads MTKLSLLPLLALASAVLA. 2 disulfide bridges follow: Cys27–Cys74 and Cys62–Cys113. 3 N-linked (GlcNAc...) asparagine glycosylation sites follow: Asn52, Asn97, and Asn137. Disulfide bonds link Cys186–Cys441, Cys255–Cys272, Cys281–Cys291, and Cys503–Cys525. The active-site Acyl-ester intermediate is the Ser187. N-linked (GlcNAc...) asparagine glycosylation is present at Asn233. Ca(2+)-binding residues include Asp256, Asp259, Ala261, Asp263, and Ile265. Asn311 is a glycosylation site (N-linked (GlcNAc...) asparagine). Residues Asp400 and His440 each act as charge relay system in the active site. N-linked (GlcNAc...) asparagine glycosylation is present at Asn516.

It belongs to the tannase family.

Its subcellular location is the secreted. The catalysed reaction is feruloyl-polysaccharide + H2O = ferulate + polysaccharide.. Involved in degradation of plant cell walls. Hydrolyzes the feruloyl-arabinose ester bond in arabinoxylans as well as the feruloyl-galactose and feruloyl-arabinose ester bonds in pectin. This Neosartorya fischeri (strain ATCC 1020 / DSM 3700 / CBS 544.65 / FGSC A1164 / JCM 1740 / NRRL 181 / WB 181) (Aspergillus fischerianus) protein is Probable feruloyl esterase B-2 (faeB-2).